A 405-amino-acid chain; its full sequence is Acetate kinase (405 aa).

Asn-7 contributes to the Mg(2+) binding site. Lys-14 contacts ATP. Arg-99 contributes to the substrate binding site. Asp-156 functions as the Proton donor/acceptor in the catalytic mechanism. 215–219 (HLGNG) contacts ATP. Glu-391 is a binding site for Mg(2+).

Belongs to the acetokinase family. In terms of assembly, homodimer. Requires Mg(2+) as cofactor. Mn(2+) serves as cofactor.

It localises to the cytoplasm. It carries out the reaction acetate + ATP = acetyl phosphate + ADP. The protein operates within metabolic intermediate biosynthesis; acetyl-CoA biosynthesis; acetyl-CoA from acetate: step 1/2. Catalyzes the formation of acetyl phosphate from acetate and ATP. Can also catalyze the reverse reaction. The sequence is that of Acetate kinase from Trichormus variabilis (strain ATCC 29413 / PCC 7937) (Anabaena variabilis).